The chain runs to 302 residues: UDP-N-acetylenolpyruvoylglucosamine reductase (302 aa).

In terms of domain architecture, FAD-binding PCMH-type spans 32 to 195; sequence LGGPADLLAR…VTVTLELVPD (164 aa). R175 is a catalytic residue. The Proton donor role is filled by S224. Residue E294 is part of the active site.

It belongs to the MurB family. FAD serves as cofactor.

It is found in the cytoplasm. The catalysed reaction is UDP-N-acetyl-alpha-D-muramate + NADP(+) = UDP-N-acetyl-3-O-(1-carboxyvinyl)-alpha-D-glucosamine + NADPH + H(+). The protein operates within cell wall biogenesis; peptidoglycan biosynthesis. Functionally, cell wall formation. The protein is UDP-N-acetylenolpyruvoylglucosamine reductase of Moorella thermoacetica (strain ATCC 39073 / JCM 9320).